The sequence spans 110 residues: U12-hexatoxin-Hi1a (110 aa).

A signal peptide spans 1-18 (MRVALVFLVLSILAATHG). 3 cysteine pairs are disulfide-bonded: cysteine 72/cysteine 86, cysteine 79/cysteine 91, and cysteine 85/cysteine 104.

Expressed by the venom gland.

It localises to the secreted. Functionally, probable ion channel inhibitor. The sequence is that of U12-hexatoxin-Hi1a from Hadronyche infensa (Fraser island funnel-web spider).